The sequence spans 473 residues: L-seryl-tRNA(Sec) selenium transferase (473 aa).

Position 302 is an N6-(pyridoxal phosphate)lysine (Lys302).

This sequence belongs to the SelA family. It depends on pyridoxal 5'-phosphate as a cofactor.

It is found in the cytoplasm. It catalyses the reaction L-seryl-tRNA(Sec) + selenophosphate + H(+) = L-selenocysteinyl-tRNA(Sec) + phosphate. It participates in aminoacyl-tRNA biosynthesis; selenocysteinyl-tRNA(Sec) biosynthesis; selenocysteinyl-tRNA(Sec) from L-seryl-tRNA(Sec) (bacterial route): step 1/1. Its function is as follows. Converts seryl-tRNA(Sec) to selenocysteinyl-tRNA(Sec) required for selenoprotein biosynthesis. This Shewanella oneidensis (strain ATCC 700550 / JCM 31522 / CIP 106686 / LMG 19005 / NCIMB 14063 / MR-1) protein is L-seryl-tRNA(Sec) selenium transferase.